The sequence spans 359 residues: Photosystem II protein D1 1 (359 aa).

The next 3 helical transmembrane spans lie at 29 to 46 (YVGW…AATI), 118 to 133 (HFLI…EWEL), and 142 to 156 (WICV…AASA). Position 118 (H118) interacts with chlorophyll a. Y126 is a pheophytin a binding site. Residues D170 and E189 each coordinate [CaMn4O5] cluster. The helical transmembrane segment at 197-218 (FHMLGVAGVFGGSLFSAMHGSL) threads the bilayer. Residue H198 coordinates chlorophyll a. A quinone is bound by residues H215 and 264-265 (SF). H215 serves as a coordination point for Fe cation. H272 is a Fe cation binding site. A helical membrane pass occupies residues 274–288 (FLAAWPVVGIWFTAL). [CaMn4O5] cluster-binding residues include H332, E333, D342, and A344. The propeptide occupies 345–359 (AAESTPVALQAPAIG).

The protein belongs to the reaction center PufL/M/PsbA/D family. In terms of assembly, PSII is composed of 1 copy each of membrane proteins PsbA, PsbB, PsbC, PsbD, PsbE, PsbF, PsbH, PsbI, PsbJ, PsbK, PsbL, PsbM, PsbT, PsbX, PsbY, PsbZ, Psb30/Ycf12, peripheral proteins PsbO, CyanoQ (PsbQ), PsbU, PsbV and a large number of cofactors. It forms dimeric complexes. It depends on The D1/D2 heterodimer binds P680, chlorophylls that are the primary electron donor of PSII, and subsequent electron acceptors. It shares a non-heme iron and each subunit binds pheophytin, quinone, additional chlorophylls, carotenoids and lipids. D1 provides most of the ligands for the Mn4-Ca-O5 cluster of the oxygen-evolving complex (OEC). There is also a Cl(-1) ion associated with D1 and D2, which is required for oxygen evolution. The PSII complex binds additional chlorophylls, carotenoids and specific lipids. as a cofactor. Tyr-161 forms a radical intermediate that is referred to as redox-active TyrZ, YZ or Y-Z. Post-translationally, C-terminally processed by CtpA; processing is essential to allow assembly of the oxygen-evolving complex and thus photosynthetic growth.

It localises to the cellular thylakoid membrane. It catalyses the reaction 2 a plastoquinone + 4 hnu + 2 H2O = 2 a plastoquinol + O2. Photosystem II (PSII) is a light-driven water:plastoquinone oxidoreductase that uses light energy to abstract electrons from H(2)O, generating O(2) and a proton gradient subsequently used for ATP formation. It consists of a core antenna complex that captures photons, and an electron transfer chain that converts photonic excitation into a charge separation. The D1/D2 (PsbA/PsbD) reaction center heterodimer binds P680, the primary electron donor of PSII as well as several subsequent electron acceptors. In Synechococcus sp. (strain CC9605), this protein is Photosystem II protein D1 1.